We begin with the raw amino-acid sequence, 354 residues long: Fructose-bisphosphate aldolase (354 aa).

S50 contacts D-glyceraldehyde 3-phosphate. Catalysis depends on D83, which acts as the Proton donor. Zn(2+) is bound by residues H84, D105, E142, and H198. Dihydroxyacetone phosphate is bound at residue G199. H232 contacts Zn(2+). Residues G233–S235 and N275–T278 contribute to the dihydroxyacetone phosphate site.

This sequence belongs to the class II fructose-bisphosphate aldolase family. Requires Zn(2+) as cofactor.

The enzyme catalyses beta-D-fructose 1,6-bisphosphate = D-glyceraldehyde 3-phosphate + dihydroxyacetone phosphate. It functions in the pathway carbohydrate degradation; glycolysis; D-glyceraldehyde 3-phosphate and glycerone phosphate from D-glucose: step 4/4. Its function is as follows. Catalyzes the aldol condensation of dihydroxyacetone phosphate (DHAP or glycerone-phosphate) with glyceraldehyde 3-phosphate (G3P) to form fructose 1,6-bisphosphate (FBP) in gluconeogenesis and the reverse reaction in glycolysis. In Stutzerimonas stutzeri (Pseudomonas stutzeri), this protein is Fructose-bisphosphate aldolase (fba).